Reading from the N-terminus, the 494-residue chain is Guanosine-5'-triphosphate,3'-diphosphate pyrophosphatase (494 aa).

Belongs to the GppA/Ppx family. GppA subfamily.

The enzyme catalyses guanosine 3'-diphosphate 5'-triphosphate + H2O = guanosine 3',5'-bis(diphosphate) + phosphate + H(+). It participates in purine metabolism; ppGpp biosynthesis; ppGpp from GTP: step 2/2. In terms of biological role, catalyzes the conversion of pppGpp to ppGpp. Guanosine pentaphosphate (pppGpp) is a cytoplasmic signaling molecule which together with ppGpp controls the 'stringent response', an adaptive process that allows bacteria to respond to amino acid starvation, resulting in the coordinated regulation of numerous cellular activities. The polypeptide is Guanosine-5'-triphosphate,3'-diphosphate pyrophosphatase (Escherichia fergusonii (strain ATCC 35469 / DSM 13698 / CCUG 18766 / IAM 14443 / JCM 21226 / LMG 7866 / NBRC 102419 / NCTC 12128 / CDC 0568-73)).